We begin with the raw amino-acid sequence, 213 residues long: Ribosomal RNA large subunit methyltransferase E (213 aa).

The S-adenosyl-L-methionine site is built by G60, W62, D80, D96, and D121. K161 functions as the Proton acceptor in the catalytic mechanism.

Belongs to the class I-like SAM-binding methyltransferase superfamily. RNA methyltransferase RlmE family.

Its subcellular location is the cytoplasm. The enzyme catalyses uridine(2552) in 23S rRNA + S-adenosyl-L-methionine = 2'-O-methyluridine(2552) in 23S rRNA + S-adenosyl-L-homocysteine + H(+). In terms of biological role, specifically methylates the uridine in position 2552 of 23S rRNA at the 2'-O position of the ribose in the fully assembled 50S ribosomal subunit. The polypeptide is Ribosomal RNA large subunit methyltransferase E (Xylella fastidiosa (strain M23)).